A 222-amino-acid chain; its full sequence is MIETILPAGVESAELLEYPEDLKAHPAEEHLIAKSVEKRRRDFIGARHCARLALAELGEPPVAIGKGERGAPIWPRGVVGSLTHCDGYRAAAVAHKMRFRSIGIDAEPHATLPEGVLDSVSLPPEREWLKTTDSALHLDRLLFCAKEATYKAWWPLTARWLGFEEAHITFEIEDGSADSGNGTFHSELLVPGQTNDGGTPLLSFDGRWLIADGFILTAIAYA.

Mg(2+) contacts are provided by Asp-105, Glu-107, and Glu-147.

It belongs to the P-Pant transferase superfamily. As to quaternary structure, monomer. Requires Mg(2+) as cofactor.

It catalyses the reaction apo-[ACP] + CoA = holo-[ACP] + adenosine 3',5'-bisphosphate + H(+). Its function is as follows. Catalyzes the transfer of the 4'-phosphopantetheine moiety from coenzyme A to a serine residue in the acyl-carrier domain of carboxylic acid reductase Car, thus converting apo-Car to fully active holo-Car. Is probably also responsible for the activation of other proteins with phosphopantetheine attachment sites. In Nocardia iowensis, this protein is 4'-phosphopantetheinyl transferase Npt (npt).